Consider the following 324-residue polypeptide: Biotin synthase (324 aa).

A Radical SAM core domain is found at 50 to 278 (HAGPAFTCAI…QADILVAGGR (229 aa)). The [4Fe-4S] cluster site is built by C67, C71, and C74. [2Fe-2S] cluster contacts are provided by C143 and C203.

Belongs to the radical SAM superfamily. Biotin synthase family. As to quaternary structure, homodimer. Requires [4Fe-4S] cluster as cofactor. [2Fe-2S] cluster serves as cofactor.

The catalysed reaction is (4R,5S)-dethiobiotin + (sulfur carrier)-SH + 2 reduced [2Fe-2S]-[ferredoxin] + 2 S-adenosyl-L-methionine = (sulfur carrier)-H + biotin + 2 5'-deoxyadenosine + 2 L-methionine + 2 oxidized [2Fe-2S]-[ferredoxin]. Its pathway is cofactor biosynthesis; biotin biosynthesis; biotin from 7,8-diaminononanoate: step 2/2. Its function is as follows. Catalyzes the conversion of dethiobiotin (DTB) to biotin by the insertion of a sulfur atom into dethiobiotin via a radical-based mechanism. This chain is Biotin synthase, found in Oleidesulfovibrio alaskensis (strain ATCC BAA-1058 / DSM 17464 / G20) (Desulfovibrio alaskensis).